Reading from the N-terminus, the 348-residue chain is Dihydroorotase (348 aa).

Zn(2+)-binding residues include His17 and His19. Residues 19 to 21 (HLR) and Asn45 each bind substrate. Zn(2+) contacts are provided by Lys103, His140, and His178. Lys103 is subject to N6-carboxylysine. His140 lines the substrate pocket. Substrate is bound at residue Leu223. Position 251 (Asp251) interacts with Zn(2+). Asp251 is an active-site residue. Positions 255 and 267 each coordinate substrate.

It belongs to the metallo-dependent hydrolases superfamily. DHOase family. Class II DHOase subfamily. As to quaternary structure, homodimer. Zn(2+) serves as cofactor.

It catalyses the reaction (S)-dihydroorotate + H2O = N-carbamoyl-L-aspartate + H(+). Its pathway is pyrimidine metabolism; UMP biosynthesis via de novo pathway; (S)-dihydroorotate from bicarbonate: step 3/3. Its function is as follows. Catalyzes the reversible cyclization of carbamoyl aspartate to dihydroorotate. The chain is Dihydroorotase from Salmonella arizonae (strain ATCC BAA-731 / CDC346-86 / RSK2980).